The sequence spans 208 residues: Probable GTP-binding protein EngB (208 aa).

One can recognise an EngB-type G domain in the interval 23-205 (LTSEMVILGR…RQTLLKYLLT (183 aa)). Residues 31-38 (GRSNVGKS), 57-61 (GKTRL), 84-87 (DLPG), 154-157 (TKFD), and 182-184 (FNA) each bind GTP. 2 residues coordinate Mg(2+): Ser38 and Thr59.

Belongs to the TRAFAC class TrmE-Era-EngA-EngB-Septin-like GTPase superfamily. EngB GTPase family. Mg(2+) serves as cofactor.

In terms of biological role, necessary for normal cell division and for the maintenance of normal septation. The protein is Probable GTP-binding protein EngB of Helicobacter pylori (strain Shi470).